Consider the following 236-residue polypeptide: Peptidase E (236 aa).

Catalysis depends on charge relay system residues serine 122, aspartate 137, and histidine 159.

It belongs to the peptidase S51 family.

It is found in the cytoplasm. The enzyme catalyses Dipeptidase E catalyzes the hydrolysis of dipeptides Asp-|-Xaa. It does not act on peptides with N-terminal Glu, Asn or Gln, nor does it cleave isoaspartyl peptides.. Hydrolyzes dipeptides containing N-terminal aspartate residues. May play a role in allowing the cell to use peptide aspartate to spare carbon otherwise required for the synthesis of the aspartate family of amino acids. In Shewanella sp. (strain MR-4), this protein is Peptidase E.